A 387-amino-acid chain; its full sequence is Phosphoglycerate kinase (387 aa).

Residues 21-23 (DLN), Arg-36, 59-62 (HLGR), Arg-113, and Arg-146 contribute to the substrate site. Residues Lys-197, Glu-314, and 340 to 343 (GGDT) each bind ATP.

Belongs to the phosphoglycerate kinase family. As to quaternary structure, monomer.

The protein resides in the cytoplasm. The enzyme catalyses (2R)-3-phosphoglycerate + ATP = (2R)-3-phospho-glyceroyl phosphate + ADP. Its pathway is carbohydrate degradation; glycolysis; pyruvate from D-glyceraldehyde 3-phosphate: step 2/5. This Pseudomonas syringae pv. syringae (strain B728a) protein is Phosphoglycerate kinase.